Consider the following 345-residue polypeptide: S-adenosylmethionine:tRNA ribosyltransferase-isomerase (345 aa).

It belongs to the QueA family. In terms of assembly, monomer.

The protein localises to the cytoplasm. It catalyses the reaction 7-aminomethyl-7-carbaguanosine(34) in tRNA + S-adenosyl-L-methionine = epoxyqueuosine(34) in tRNA + adenine + L-methionine + 2 H(+). It participates in tRNA modification; tRNA-queuosine biosynthesis. Its function is as follows. Transfers and isomerizes the ribose moiety from AdoMet to the 7-aminomethyl group of 7-deazaguanine (preQ1-tRNA) to give epoxyqueuosine (oQ-tRNA). This chain is S-adenosylmethionine:tRNA ribosyltransferase-isomerase, found in Anaeromyxobacter sp. (strain K).